Reading from the N-terminus, the 95-residue chain is Aspartyl/glutamyl-tRNA(Asn/Gln) amidotransferase subunit C (95 aa).

This sequence belongs to the GatC family. In terms of assembly, heterotrimer of A, B and C subunits.

It carries out the reaction L-glutamyl-tRNA(Gln) + L-glutamine + ATP + H2O = L-glutaminyl-tRNA(Gln) + L-glutamate + ADP + phosphate + H(+). The enzyme catalyses L-aspartyl-tRNA(Asn) + L-glutamine + ATP + H2O = L-asparaginyl-tRNA(Asn) + L-glutamate + ADP + phosphate + 2 H(+). Functionally, allows the formation of correctly charged Asn-tRNA(Asn) or Gln-tRNA(Gln) through the transamidation of misacylated Asp-tRNA(Asn) or Glu-tRNA(Gln) in organisms which lack either or both of asparaginyl-tRNA or glutaminyl-tRNA synthetases. The reaction takes place in the presence of glutamine and ATP through an activated phospho-Asp-tRNA(Asn) or phospho-Glu-tRNA(Gln). In Bradyrhizobium sp. (strain BTAi1 / ATCC BAA-1182), this protein is Aspartyl/glutamyl-tRNA(Asn/Gln) amidotransferase subunit C.